The chain runs to 219 residues: Small ribosomal subunit protein uS3 (219 aa).

Positions 38-106 constitute a KH type-2 domain; it reads IRKFIEKRLV…RVHINIVEIK (69 aa).

Belongs to the universal ribosomal protein uS3 family. Part of the 30S ribosomal subunit. Forms a tight complex with proteins S10 and S14.

Its function is as follows. Binds the lower part of the 30S subunit head. Binds mRNA in the 70S ribosome, positioning it for translation. The chain is Small ribosomal subunit protein uS3 from Levilactobacillus brevis (strain ATCC 367 / BCRC 12310 / CIP 105137 / JCM 1170 / LMG 11437 / NCIMB 947 / NCTC 947) (Lactobacillus brevis).